Consider the following 769-residue polypeptide: Phenylalanine--tRNA ligase beta subunit (769 aa).

A tRNA-binding domain is found at 40-141 (GKLLTIARVA…GEPIPGCEPD (102 aa)). Residues 389–467 (PAPPPIELPL…RMIGYDSIAP (79 aa)) enclose the B5 domain. Mg(2+) is bound by residues Asp445, Asp451, Glu454, and Glu455. The 93-residue stretch at 676 to 768 (RRYPSSAFDL…GMRAKGYELR (93 aa)) folds into the FDX-ACB domain.

It belongs to the phenylalanyl-tRNA synthetase beta subunit family. Type 1 subfamily. Tetramer of two alpha and two beta subunits. It depends on Mg(2+) as a cofactor.

The protein resides in the cytoplasm. The enzyme catalyses tRNA(Phe) + L-phenylalanine + ATP = L-phenylalanyl-tRNA(Phe) + AMP + diphosphate + H(+). The chain is Phenylalanine--tRNA ligase beta subunit from Solibacter usitatus (strain Ellin6076).